A 305-amino-acid polypeptide reads, in one-letter code: Methionyl-tRNA formyltransferase (305 aa).

110-113 is a binding site for (6S)-5,6,7,8-tetrahydrofolate; it reads SLLP.

This sequence belongs to the Fmt family.

It carries out the reaction L-methionyl-tRNA(fMet) + (6R)-10-formyltetrahydrofolate = N-formyl-L-methionyl-tRNA(fMet) + (6S)-5,6,7,8-tetrahydrofolate + H(+). Its function is as follows. Attaches a formyl group to the free amino group of methionyl-tRNA(fMet). The formyl group appears to play a dual role in the initiator identity of N-formylmethionyl-tRNA by promoting its recognition by IF2 and preventing the misappropriation of this tRNA by the elongation apparatus. The chain is Methionyl-tRNA formyltransferase from Ureaplasma urealyticum serovar 10 (strain ATCC 33699 / Western).